A 325-amino-acid chain; its full sequence is tRNA(Ile)-lysidine synthase (325 aa).

34 to 39 lines the ATP pocket; it reads SGGADS.

The protein belongs to the tRNA(Ile)-lysidine synthase family.

Its subcellular location is the cytoplasm. It carries out the reaction cytidine(34) in tRNA(Ile2) + L-lysine + ATP = lysidine(34) in tRNA(Ile2) + AMP + diphosphate + H(+). Its function is as follows. Ligates lysine onto the cytidine present at position 34 of the AUA codon-specific tRNA(Ile) that contains the anticodon CAU, in an ATP-dependent manner. Cytidine is converted to lysidine, thus changing the amino acid specificity of the tRNA from methionine to isoleucine. This Rhodococcus erythropolis (strain PR4 / NBRC 100887) protein is tRNA(Ile)-lysidine synthase.